The primary structure comprises 225 residues: Protein GrpE (225 aa).

A compositionally biased stretch (polar residues) spans Met1–Val15. Disordered regions lie at residues Met1 to Gln48 and Val198 to Ala225. Residues Gly201–Ala225 are compositionally biased toward low complexity.

It belongs to the GrpE family. Homodimer.

It is found in the cytoplasm. Its function is as follows. Participates actively in the response to hyperosmotic and heat shock by preventing the aggregation of stress-denatured proteins, in association with DnaK and GrpE. It is the nucleotide exchange factor for DnaK and may function as a thermosensor. Unfolded proteins bind initially to DnaJ; upon interaction with the DnaJ-bound protein, DnaK hydrolyzes its bound ATP, resulting in the formation of a stable complex. GrpE releases ADP from DnaK; ATP binding to DnaK triggers the release of the substrate protein, thus completing the reaction cycle. Several rounds of ATP-dependent interactions between DnaJ, DnaK and GrpE are required for fully efficient folding. This chain is Protein GrpE, found in Synechococcus sp. (strain CC9605).